We begin with the raw amino-acid sequence, 384 residues long: Succinyl-diaminopimelate desuccinylase (384 aa).

His71 contributes to the Zn(2+) binding site. Asp73 is a catalytic residue. Position 104 (Asp104) interacts with Zn(2+). The active-site Proton acceptor is Glu138. Residues Glu139, Glu167, and His353 each contribute to the Zn(2+) site.

The protein belongs to the peptidase M20A family. DapE subfamily. As to quaternary structure, homodimer. The cofactor is Zn(2+). It depends on Co(2+) as a cofactor.

The catalysed reaction is N-succinyl-(2S,6S)-2,6-diaminopimelate + H2O = (2S,6S)-2,6-diaminopimelate + succinate. It functions in the pathway amino-acid biosynthesis; L-lysine biosynthesis via DAP pathway; LL-2,6-diaminopimelate from (S)-tetrahydrodipicolinate (succinylase route): step 3/3. In terms of biological role, catalyzes the hydrolysis of N-succinyl-L,L-diaminopimelic acid (SDAP), forming succinate and LL-2,6-diaminopimelate (DAP), an intermediate involved in the bacterial biosynthesis of lysine and meso-diaminopimelic acid, an essential component of bacterial cell walls. The protein is Succinyl-diaminopimelate desuccinylase of Aromatoleum aromaticum (strain DSM 19018 / LMG 30748 / EbN1) (Azoarcus sp. (strain EbN1)).